The chain runs to 452 residues: AP-4 complex subunit mu-1 (452 aa).

In terms of domain architecture, MHD spans 184–451; it reads KNEVFLDVVE…LSHSDAYVIR (268 aa).

Belongs to the adaptor complexes medium subunit family. In terms of assembly, adaptor protein complex 4 (AP-4) is a heterotetramer composed of two large adaptins (epsilon-type subunit AP4E1 and beta-type subunit AP4B1), a medium adaptin (mu-type subunit AP4M1) and a small adaptin (sigma-type AP4S1). Interacts with tyrosine-based sorting signals on the cytoplasmic tail of cargo proteins such as APP, ATG9A, LAMP2 and NAGPA. Interacts with the C-terminal domain of GRID2. Interacts with GRIA1 and GRIA2; the interaction is indirect via CACNG3. Interacts with CACNG3; CACNG3 associates GRIA1 and GRIA2 with the adaptor protein complex 4 (AP-4) to target them to the somatodendritic compartment of neurons. Interacts with HOOK1 and HOOK2; the interactions are direct, mediate the interaction between FTS-Hook-FHIP (FHF) complex and AP-4 and the perinuclear distribution of AP-4.

Its subcellular location is the golgi apparatus. The protein resides in the trans-Golgi network membrane. It is found in the early endosome. Component of the adaptor protein complex 4 (AP-4). Adaptor protein complexes are vesicle coat components involved both in vesicle formation and cargo selection. They control the vesicular transport of proteins in different trafficking pathways. AP-4 forms a non clathrin-associated coat on vesicles departing the trans-Golgi network (TGN) and may be involved in the targeting of proteins from the trans-Golgi network (TGN) to the endosomal-lysosomal system. It is also involved in protein sorting to the basolateral membrane in epithelial cells and the proper asymmetric localization of somatodendritic proteins in neurons. Within AP-4, the mu-type subunit AP4M1 is directly involved in the recognition and binding of tyrosine-based sorting signals found in the cytoplasmic part of cargos. The adaptor protein complex 4 (AP-4) may also recognize other types of sorting signal. In Bos taurus (Bovine), this protein is AP-4 complex subunit mu-1.